A 130-amino-acid polypeptide reads, in one-letter code: Small ribosomal subunit protein uS11 (130 aa).

Belongs to the universal ribosomal protein uS11 family. Part of the 30S ribosomal subunit. Interacts with proteins S7 and S18. Binds to IF-3.

Its function is as follows. Located on the platform of the 30S subunit, it bridges several disparate RNA helices of the 16S rRNA. Forms part of the Shine-Dalgarno cleft in the 70S ribosome. The chain is Small ribosomal subunit protein uS11 from Bdellovibrio bacteriovorus (strain ATCC 15356 / DSM 50701 / NCIMB 9529 / HD100).